A 192-amino-acid chain; its full sequence is UPF0149 protein VP2588 (192 aa).

This sequence belongs to the UPF0149 family.

The protein is UPF0149 protein VP2588 of Vibrio parahaemolyticus serotype O3:K6 (strain RIMD 2210633).